Reading from the N-terminus, the 235-residue chain is Ferrous iron permease EfeU (235 aa).

Over 1 to 28 (MTSRSRQAAYSGIFINETTGEFPQKEQE) the chain is Periplasmic. A helical transmembrane segment spans residues 29 to 49 (LFEGIVAVIAVVILTWMVFWM). Topologically, residues 50 to 77 (RKVSRNVKVQLEQAVDSALQRGNHHGWA) are cytoplasmic. A helical membrane pass occupies residues 78–98 (LVMMVFFAVAREGLESVFFLL). Topologically, residues 99–106 (AAFQQDVG) are periplasmic. A helical transmembrane segment spans residues 107 to 127 (IWPPLGAMLGLATAVVLGFLL). At 128–138 (YWGGIRLNLGA) the chain is on the cytoplasmic side. Residues 139-159 (FFKWTSLFILFVAAGLAAGAI) traverse the membrane as a helical segment. Residues 160-177 (RAFHEAGLWNHFQEIAFD) are Periplasmic-facing. The chain crosses the membrane as a helical span at residues 178–198 (MSAVLSTHSLFGTLMEGIFGY). Residues 199 to 203 (QEAPS) lie on the Cytoplasmic side of the membrane. A helical membrane pass occupies residues 204–224 (VSEVAVWFIYLIPALVAFALP). Over 225-235 (PRAGATASRSA) the chain is Periplasmic.

This sequence belongs to the oxidase-dependent Fe transporter (OFeT) (TC 9.A.10.1) family. In terms of assembly, part of a ferrous iron transporter composed of EfeU, EfeO and EfeB.

Its subcellular location is the cell inner membrane. In terms of biological role, uptake of Fe(2+) ions across the membrane. This chain is Ferrous iron permease EfeU (efeU), found in Shigella flexneri.